Consider the following 229-residue polypeptide: Cytochrome c oxidase subunit 2 (229 aa).

Over 1–26 the chain is Mitochondrial intermembrane; it reads MSTWANLGLQDSASPLMEQLIFFHDH. A helical transmembrane segment spans residues 27–48; sequence ALLILVMITVLVGYLMFMLFFN. Residues 49 to 62 are Mitochondrial matrix-facing; it reads SYVNRFLLHGQLIE. The helical transmembrane segment at 63–82 threads the bilayer; it reads MIWTILPAIILLFIAMPSLR. Over 83 to 229 the chain is Mitochondrial intermembrane; it reads LLYLLDEINE…IKWISNSVNS (147 aa). Cu cation contacts are provided by histidine 161, cysteine 196, glutamate 198, cysteine 200, histidine 204, and methionine 207. Glutamate 198 serves as a coordination point for Mg(2+).

This sequence belongs to the cytochrome c oxidase subunit 2 family. As to quaternary structure, component of the cytochrome c oxidase (complex IV, CIV), a multisubunit enzyme composed of a catalytic core of 3 subunits and several supernumerary subunits. The complex exists as a monomer or a dimer and forms supercomplexes (SCs) in the inner mitochondrial membrane with ubiquinol-cytochrome c oxidoreductase (cytochrome b-c1 complex, complex III, CIII). The cofactor is Cu cation.

The protein localises to the mitochondrion inner membrane. The catalysed reaction is 4 Fe(II)-[cytochrome c] + O2 + 8 H(+)(in) = 4 Fe(III)-[cytochrome c] + 2 H2O + 4 H(+)(out). Functionally, component of the cytochrome c oxidase, the last enzyme in the mitochondrial electron transport chain which drives oxidative phosphorylation. The respiratory chain contains 3 multisubunit complexes succinate dehydrogenase (complex II, CII), ubiquinol-cytochrome c oxidoreductase (cytochrome b-c1 complex, complex III, CIII) and cytochrome c oxidase (complex IV, CIV), that cooperate to transfer electrons derived from NADH and succinate to molecular oxygen, creating an electrochemical gradient over the inner membrane that drives transmembrane transport and the ATP synthase. Cytochrome c oxidase is the component of the respiratory chain that catalyzes the reduction of oxygen to water. Electrons originating from reduced cytochrome c in the intermembrane space (IMS) are transferred via the dinuclear copper A center (CU(A)) of subunit 2 and heme A of subunit 1 to the active site in subunit 1, a binuclear center (BNC) formed by heme A3 and copper B (CU(B)). The BNC reduces molecular oxygen to 2 water molecules using 4 electrons from cytochrome c in the IMS and 4 protons from the mitochondrial matrix. This chain is Cytochrome c oxidase subunit 2 (mt:CoII), found in Drosophila affinis (Fruit fly).